The sequence spans 487 residues: Probable Xaa-Pro aminopeptidase MGYG_06974 (487 aa).

The Mn(2+) site is built by aspartate 255, aspartate 266, glutamate 414, and glutamate 458.

It belongs to the peptidase M24B family. The cofactor is Mn(2+).

It catalyses the reaction Release of any N-terminal amino acid, including proline, that is linked to proline, even from a dipeptide or tripeptide.. Catalyzes the removal of a penultimate prolyl residue from the N-termini of peptides. This is Probable Xaa-Pro aminopeptidase MGYG_06974 from Arthroderma gypseum (strain ATCC MYA-4604 / CBS 118893) (Microsporum gypseum).